Reading from the N-terminus, the 86-residue chain is Defensin-like protein a (86 aa).

Residues methionine 1 to glycine 23 form the signal peptide. 4 disulfides stabilise this stretch: cysteine 33–cysteine 81, cysteine 43–cysteine 67, cysteine 51–cysteine 76, and cysteine 65–cysteine 78.

This sequence belongs to the DEFL family. As to expression, expressed specifically in anthers.

The protein localises to the secreted. Functionally, involved in self-incompatibility. The sequence is that of Defensin-like protein a (SCRa) from Arabidopsis lyrata (Lyre-leaved rock-cress).